The sequence spans 122 residues: Large ribosomal subunit protein uL14 (122 aa).

The protein belongs to the universal ribosomal protein uL14 family. Part of the 50S ribosomal subunit. Forms a cluster with proteins L3 and L19. In the 70S ribosome, L14 and L19 interact and together make contacts with the 16S rRNA in bridges B5 and B8.

Binds to 23S rRNA. Forms part of two intersubunit bridges in the 70S ribosome. The protein is Large ribosomal subunit protein uL14 of Leuconostoc citreum (strain KM20).